Here is a 386-residue protein sequence, read N- to C-terminus: Chaperone protein DnaJ (386 aa).

Residues 5–69 (DLYDVLGVKK…QKRAQYDQFG (65 aa)) form the J domain. The CR-type zinc finger occupies 140–224 (GKETSIKYNR…CHGAGVTEER (85 aa)). Zn(2+) contacts are provided by Cys153, Cys156, Cys170, Cys173, Cys196, Cys199, Cys212, and Cys215. CXXCXGXG motif repeat units follow at residues 153 to 160 (CHTCHGSG), 170 to 177 (CSTCHGQG), 196 to 203 (CPTCGGKG), and 212 to 219 (CDTCHGAG).

The protein belongs to the DnaJ family. Homodimer. Requires Zn(2+) as cofactor.

The protein resides in the cytoplasm. In terms of biological role, participates actively in the response to hyperosmotic and heat shock by preventing the aggregation of stress-denatured proteins and by disaggregating proteins, also in an autonomous, DnaK-independent fashion. Unfolded proteins bind initially to DnaJ; upon interaction with the DnaJ-bound protein, DnaK hydrolyzes its bound ATP, resulting in the formation of a stable complex. GrpE releases ADP from DnaK; ATP binding to DnaK triggers the release of the substrate protein, thus completing the reaction cycle. Several rounds of ATP-dependent interactions between DnaJ, DnaK and GrpE are required for fully efficient folding. Also involved, together with DnaK and GrpE, in the DNA replication of plasmids through activation of initiation proteins. The protein is Chaperone protein DnaJ of Limosilactobacillus fermentum (strain NBRC 3956 / LMG 18251) (Lactobacillus fermentum).